A 210-amino-acid chain; its full sequence is MSQAEIDFITQFRTIPTTCISDALDGLTNLTSTIKPLNENDQVVGPARTVQVASGDNLAVLKAMYEASPGDVIVIDAKGDCTRAIAGDFVLGMAKTLGIAGFVVDGAIRDIRASKALNFPIFCRGTTIAASKKTGIGNINVPISCGGVPIRPGDLIVGDADGVTVIPKGQEENVLQKAKKKQADDEARERAISDNVMAIRAYLEKMIHPS.

Substrate-binding positions include 87-90 (GDFV) and Arg109. Asp110 provides a ligand contact to a divalent metal cation.

It belongs to the class II aldolase/RraA-like family. In terms of assembly, homotrimer. The cofactor is a divalent metal cation.

The enzyme catalyses 4-hydroxy-4-methyl-2-oxoglutarate = 2 pyruvate. It carries out the reaction oxaloacetate + H(+) = pyruvate + CO2. In terms of biological role, catalyzes the aldol cleavage of 4-hydroxy-4-methyl-2-oxoglutarate (HMG) into 2 molecules of pyruvate. Also contains a secondary oxaloacetate (OAA) decarboxylase activity due to the common pyruvate enolate transition state formed following C-C bond cleavage in the retro-aldol and decarboxylation reactions. This is Putative 4-hydroxy-4-methyl-2-oxoglutarate aldolase from Halalkalibacterium halodurans (strain ATCC BAA-125 / DSM 18197 / FERM 7344 / JCM 9153 / C-125) (Bacillus halodurans).